The primary structure comprises 159 residues: RNA pyrophosphohydrolase (159 aa).

In terms of domain architecture, Nudix hydrolase spans 6–149 (GFRPNVGIIL…KREVYRRALK (144 aa)). Residues 38–59 (GGINPDETPEDALYRELNEEVG) carry the Nudix box motif.

The protein belongs to the Nudix hydrolase family. RppH subfamily. Requires a divalent metal cation as cofactor.

Its function is as follows. Accelerates the degradation of transcripts by removing pyrophosphate from the 5'-end of triphosphorylated RNA, leading to a more labile monophosphorylated state that can stimulate subsequent ribonuclease cleavage. In Pseudomonas fluorescens (strain ATCC BAA-477 / NRRL B-23932 / Pf-5), this protein is RNA pyrophosphohydrolase.